Reading from the N-terminus, the 51-residue chain is UPF0391 membrane protein Mbur_2216 (51 aa).

2 consecutive transmembrane segments (helical) span residues 1-21 and 31-51; these read MADLIGLAIVFLIFALVAYVL and MTIAKWLVIIFIVLAIITILL.

Belongs to the UPF0391 family.

It is found in the cell membrane. The polypeptide is UPF0391 membrane protein Mbur_2216 (Methanococcoides burtonii (strain DSM 6242 / NBRC 107633 / OCM 468 / ACE-M)).